Here is a 169-residue protein sequence, read N- to C-terminus: MYQAVAFLAMIVGTHTVSLRIQEGCSHLPSCCPSKEQEPPEEWLKWSSASVSPPEPLSHTHHAESCRASKDGPLNSRAISPWSYELDRDLNRVPQDLYHARCLCPHCVSLQTGSHMDPLGNSVPLYHNQTVFYRRPCHGEEGTHRRYCLERRLYRVSLACVCVRPRVMA.

The first 16 residues, 1–16 (MYQAVAFLAMIVGTHT), serve as a signal peptide directing secretion. Residues 47 to 70 (SSASVSPPEPLSHTHHAESCRASK) are disordered. Positions 61 to 70 (HHAESCRASK) are enriched in basic and acidic residues. 2 disulfide bridges follow: C102-C160 and C107-C162. N128 carries an N-linked (GlcNAc...) asparagine glycan.

It belongs to the IL-17 family.

The protein resides in the secreted. Cytokine produced by various cells such as eosinophils, T-helper type 2 (Th2) cells or epithelial cells that plays a role in internal safety of adaptive immune responses by regulating cytokine production. Promotes and augments T-helper type 2 responses locally or systemically. Exerts its activity via its receptor composed of IL17RA and IL17RB for signal transduction. In turn, stimulates the JAK2-STAT5A pathway and promotes the secretion of type-2 associated cytokines including IL4, IL9 and IL13. Also induces the release of IL8, and IL6 from eosinophils through the combined activation of MAPK and NF-kappa-B pathways. Inhibits the differentiation of T-helper (Th17) cells via the production of IL4, IL5 and IL13. The chain is Interleukin-25 (Il25) from Mus musculus (Mouse).